A 1085-amino-acid polypeptide reads, in one-letter code: Error-prone DNA polymerase 2 (1085 aa).

The segment at 1040 to 1066 is disordered; sequence AGRGDEFAHGGGGPDSRDRQKPVVPRD.

This sequence belongs to the DNA polymerase type-C family. DnaE2 subfamily.

It localises to the cytoplasm. The enzyme catalyses DNA(n) + a 2'-deoxyribonucleoside 5'-triphosphate = DNA(n+1) + diphosphate. Its function is as follows. DNA polymerase involved in damage-induced mutagenesis and translesion synthesis (TLS). It is not the major replicative DNA polymerase. The sequence is that of Error-prone DNA polymerase 2 from Agrobacterium fabrum (strain C58 / ATCC 33970) (Agrobacterium tumefaciens (strain C58)).